Here is a 149-residue protein sequence, read N- to C-terminus: Large ribosomal subunit protein eL19 (149 aa).

Residues 67-90 are disordered; that stretch reads KRKLQKRKGRRRGHGSRKGAKGAR.

The protein belongs to the eukaryotic ribosomal protein eL19 family. Part of the 50S ribosomal subunit.

Binds to the 23S rRNA. This chain is Large ribosomal subunit protein eL19, found in Archaeoglobus fulgidus (strain ATCC 49558 / DSM 4304 / JCM 9628 / NBRC 100126 / VC-16).